The chain runs to 148 residues: Nucleoside diphosphate kinase 1 (148 aa).

The ATP site is built by Lys9, Phe57, Arg85, Thr91, Arg102, and Asn112. The Pros-phosphohistidine intermediate role is filled by His115.

Belongs to the NDK family. Mg(2+) serves as cofactor.

The enzyme catalyses a 2'-deoxyribonucleoside 5'-diphosphate + ATP = a 2'-deoxyribonucleoside 5'-triphosphate + ADP. It catalyses the reaction a ribonucleoside 5'-diphosphate + ATP = a ribonucleoside 5'-triphosphate + ADP. Its function is as follows. Major role in the synthesis of nucleoside triphosphates other than ATP. The ATP gamma phosphate is transferred to the NDP beta phosphate via a ping-pong mechanism, using a phosphorylated active-site intermediate. The polypeptide is Nucleoside diphosphate kinase 1 (Nicotiana tabacum (Common tobacco)).